A 609-amino-acid polypeptide reads, in one-letter code: Glutamine--fructose-6-phosphate aminotransferase [isomerizing] (609 aa).

Cys-2 acts as the Nucleophile; for GATase activity in catalysis. Positions 2 to 218 (CGIVGAIAQR…EGDIAEITRR (217 aa)) constitute a Glutamine amidotransferase type-2 domain. 2 SIS domains span residues 286–426 (ADEL…LKGL) and 458–599 (LAED…VDQP). The active-site For Fru-6P isomerization activity is Lys-604.

Homodimer.

Its subcellular location is the cytoplasm. The enzyme catalyses D-fructose 6-phosphate + L-glutamine = D-glucosamine 6-phosphate + L-glutamate. Functionally, catalyzes the first step in hexosamine metabolism, converting fructose-6P into glucosamine-6P using glutamine as a nitrogen source. The chain is Glutamine--fructose-6-phosphate aminotransferase [isomerizing] from Salmonella typhimurium (strain LT2 / SGSC1412 / ATCC 700720).